Reading from the N-terminus, the 875-residue chain is Probable serine/threonine-protein kinase samkC (875 aa).

Positions 1–12 are enriched in polar residues; that stretch reads METTTITSILDD. Positions 1-47 are disordered; the sequence is METTTITSILDDNNNNNNNNNNNNNNNNNNNNNNNNNNNNNNNNNYN. The span at 13 to 45 shows a compositional bias: low complexity; it reads NNNNNNNNNNNNNNNNNNNNNNNNNNNNNNNNN. Residues 51–116 form the SAM domain; that stretch reads WDNEMVCKWL…SEFDDLKNIF (66 aa). Residues 135–162 adopt a coiled-coil conformation; sequence DNNNLNNLNNNNNNNNNNNNNNNNNNNN. Residues 136 to 168 are compositionally biased toward low complexity; that stretch reads NNNLNNLNNNNNNNNNNNNNNNNNNNNNNNNNN. Residues 136–170 are disordered; the sequence is NNNLNNLNNNNNNNNNNNNNNNNNNNNNNNNNNKT. Positions 181–452 constitute a Protein kinase domain; sequence YVFIKQMKGS…SKQLLNFSWF (272 aa). ATP is bound by residues 187–195 and Lys-210; that span reads MKGSVNCSL. Asp-301 acts as the Proton acceptor in catalysis. Disordered regions lie at residues 331–362 and 461–718; these read NNNDDDNYDNHNHNHNHNHNHNHDNDNDNDTN and SEPQ…NNNN. The segment covering 474-554 has biased composition (low complexity); it reads PQTSQSKPKP…KPKPSSSLSS (81 aa). The segment covering 555–564 has biased composition (pro residues); the sequence is EPPPLEPQPK. Low complexity-rich tracts occupy residues 565-581, 589-611, and 617-653; these read PQTSQSKPKPSSSLSSS, QPTQSSKPQPSQSKPQPIQSQPT, and QPKSSKQQPQSKQQQQQQQQQQQQQQQQQQQQQQQQK. Positions 626-655 form a coiled coil; that stretch reads QSKQQQQQQQQQQQQQQQQQQQQQQQQKSK. Residues 654–663 are compositionally biased toward basic and acidic residues; sequence SKPEQSKSKP. The segment covering 664–718 has biased composition (low complexity); sequence EQSQSKPQPGQPLQSPSKPQPIPSTTKTTTTTTTTTTPNNNNNNNNNNNNNNNNN. Residues 842 to 862 form a helical membrane-spanning segment; sequence TLILYTFYYFLSNTLIYQIIL.

This sequence belongs to the protein kinase superfamily. Ser/Thr protein kinase family.

The protein localises to the membrane. The enzyme catalyses L-seryl-[protein] + ATP = O-phospho-L-seryl-[protein] + ADP + H(+). It catalyses the reaction L-threonyl-[protein] + ATP = O-phospho-L-threonyl-[protein] + ADP + H(+). The polypeptide is Probable serine/threonine-protein kinase samkC (samkC) (Dictyostelium discoideum (Social amoeba)).